The primary structure comprises 621 residues: MESSPESLQPLEHGVAAGPASGTGSSQEGLQETRLAAGDGPGVWAAETSGGNGLGAAAARRSLPDSASPAGSPEVPGPCSSSAGLDLKDSGLESPAAAEAPLRGQYKVTASPETAVAGVGHELGTAGDAGARPDLAGTCQAELTAAGSEEPSSAGGLSSSCSDPSPPGESPSLDSLESFSNLHSFPSSCEFNSEEGAENRVPEEEEGAAVLPGAVPLCKEEEGEETAQVLAASKERFPGQSVYHIKWIQWKEENTPIITQNENGPCPLLAILNVLLLAWKVKLPPMMEIITAEQLMEYLGDYMLDAKPKEISEIQRLNYEQNMSDAMAILHKLQTGLDVNVRFTGVRVFEYTPECIVFDLLDIPLYHGWLVDPQIDDIVKAVGNCSYNQLVEKIISCKQSDNSELVSEGFVAEQFLNNTATQLTYHGLCELTSTVQEGELCVFFRNNHFSTMTKYKGQLYLLVTDQGFLTEEKVVWESLHNVDGDGNFCDSEFHLRPPSDPETVYKGQQDQIDQDYLMALSLQQEQQSQEINWEQIPEGISDLELAKKLQEEEDRRASQYYQEQEQAAAAAAAASTQAQQGQPAQASPSSGRQSGNSERKRKEPREKDKEKEKEKNSCVIL.

Disordered regions lie at residues 1–106 (MESS…RGQY) and 119–179 (VGHE…LESF). Position 94 is a phosphoserine (S94). A compositionally biased stretch (low complexity) spans 145 to 163 (AAGSEEPSSAGGLSSSCSD). C266 (nucleophile) is an active-site residue. H448 functions as the Proton acceptor in the catalytic mechanism. Residues 507 to 559 (GQQDQIDQDYLMALSLQQEQQSQEINWEQIPEGISDLELAKKLQEEEDRRASQ) are ubiquitin-binding domain (UBD). A disordered region spans residues 556 to 621 (RASQYYQEQE…EKEKNSCVIL (66 aa)). A compositionally biased stretch (low complexity) spans 558–591 (SQYYQEQEQAAAAAAAASTQAQQGQPAQASPSSG). Positions 597 to 621 (SERKRKEPREKDKEKEKEKNSCVIL) are enriched in basic and acidic residues.

The protein belongs to the MINDY deubiquitinase family. FAM63 subfamily.

It carries out the reaction Thiol-dependent hydrolysis of ester, thioester, amide, peptide and isopeptide bonds formed by the C-terminal Gly of ubiquitin (a 76-residue protein attached to proteins as an intracellular targeting signal).. Functionally, hydrolase that can remove 'Lys-48'-linked conjugated ubiquitin from proteins. Binds to polyubiquitin chains of different linkage types, including 'Lys-6', 'Lys-11', 'Lys-29', 'Lys-33', 'Lys-48' and 'Lys-63'. May play a regulatory role at the level of protein turnover. The protein is Ubiquitin carboxyl-terminal hydrolase MINDY-2 of Homo sapiens (Human).